Consider the following 255-residue polypeptide: Octanoyltransferase (255 aa).

The interval 1-21 (MCATPVSPSPESPRSAQAGAA) is disordered. Residues 56 to 242 (FETSDEIWLV…SLIANIDGIP (187 aa)) form the BPL/LPL catalytic domain. Substrate-binding positions include 96–103 (RGGQITYH), 173–175 (ALG), and 186–188 (GVS). The active-site Acyl-thioester intermediate is the Cys-204.

It belongs to the LipB family.

Its subcellular location is the cytoplasm. The catalysed reaction is octanoyl-[ACP] + L-lysyl-[protein] = N(6)-octanoyl-L-lysyl-[protein] + holo-[ACP] + H(+). Its pathway is protein modification; protein lipoylation via endogenous pathway; protein N(6)-(lipoyl)lysine from octanoyl-[acyl-carrier-protein]: step 1/2. Catalyzes the transfer of endogenously produced octanoic acid from octanoyl-acyl-carrier-protein onto the lipoyl domains of lipoate-dependent enzymes. Lipoyl-ACP can also act as a substrate although octanoyl-ACP is likely to be the physiological substrate. The chain is Octanoyltransferase from Paraburkholderia phymatum (strain DSM 17167 / CIP 108236 / LMG 21445 / STM815) (Burkholderia phymatum).